The sequence spans 157 residues: 6,7-dimethyl-8-ribityllumazine synthase (157 aa).

5-amino-6-(D-ribitylamino)uracil contacts are provided by residues Phe-30, 64 to 66, and 88 to 90; these read ALE and CII. 93 to 94 contributes to the (2S)-2-hydroxy-3-oxobutyl phosphate binding site; the sequence is ET. His-96 serves as the catalytic Proton donor. Asn-121 contacts 5-amino-6-(D-ribitylamino)uracil. Arg-135 is a binding site for (2S)-2-hydroxy-3-oxobutyl phosphate.

The protein belongs to the DMRL synthase family.

The enzyme catalyses (2S)-2-hydroxy-3-oxobutyl phosphate + 5-amino-6-(D-ribitylamino)uracil = 6,7-dimethyl-8-(1-D-ribityl)lumazine + phosphate + 2 H2O + H(+). It functions in the pathway cofactor biosynthesis; riboflavin biosynthesis; riboflavin from 2-hydroxy-3-oxobutyl phosphate and 5-amino-6-(D-ribitylamino)uracil: step 1/2. Its function is as follows. Catalyzes the formation of 6,7-dimethyl-8-ribityllumazine by condensation of 5-amino-6-(D-ribitylamino)uracil with 3,4-dihydroxy-2-butanone 4-phosphate. This is the penultimate step in the biosynthesis of riboflavin. The sequence is that of 6,7-dimethyl-8-ribityllumazine synthase from Albidiferax ferrireducens (strain ATCC BAA-621 / DSM 15236 / T118) (Rhodoferax ferrireducens).